The primary structure comprises 51 residues: uncharacterized protein (51 aa).

The segment at 1–51 (MARTNVKLCPPKRSKRPSNSRSKSTSHSNRRSLNSLRRTRTSRRSNNGKFT) is disordered. Residues 19 to 36 (NSRSKSTSHSNRRSLNSL) show a composition bias toward low complexity.

This is an uncharacterized protein from Bdellovibrio bacteriovorus (Bacteriophage phiMH2K).